We begin with the raw amino-acid sequence, 104 residues long: Integration host factor subunit alpha (104 aa).

Residues G51–E70 form a disordered region.

This sequence belongs to the bacterial histone-like protein family. Heterodimer of an alpha and a beta chain.

Its function is as follows. This protein is one of the two subunits of integration host factor, a specific DNA-binding protein that functions in genetic recombination as well as in transcriptional and translational control. The polypeptide is Integration host factor subunit alpha (Ralstonia nicotianae (strain ATCC BAA-1114 / GMI1000) (Ralstonia solanacearum)).